A 309-amino-acid polypeptide reads, in one-letter code: MDISFLVFITLSMALFSSNVTGTSVTSRVRRGINEKHCGFRPVITRIIGGGIATPHSWPWMVGIFKVNPHRFLCGGSIINKVSVVTAAHCLVTQFGNRQNYSIFVRVGAHDIDNSGTNYQVDKVIVHQGYKHHSHYYDIGLILLSKPVEYNDKIQPVCIPEFNKPHVNLNNIKVVITGWGVTGKATEKRNVLRELELPVVTNEQCNKSYQTLPFSKLNRGITNDMICAGFPEGGKDACQGDSGGPLMYQNPTTGRVKIVGVVSFGFECARPNFPGVYTRLSSYVNWLQEITFGQSLASLFEVVPIFIPE.

The signal sequence occupies residues 1–31 (MDISFLVFITLSMALFSSNVTGTSVTSRVRR). 4 cysteine pairs are disulfide-bonded: Cys-38–Cys-158, Cys-74–Cys-90, Cys-205–Cys-227, and Cys-238–Cys-268. The region spanning 47–292 (IIGGGIATPH…YVNWLQEITF (246 aa)) is the Peptidase S1 domain. Catalysis depends on His-89, which acts as the Charge relay system. N-linked (GlcNAc...) asparagine glycosylation is present at Asn-100. The active-site Charge relay system is the Asp-138. An N-linked (GlcNAc...) asparagine glycan is attached at Asn-206. Catalysis depends on Ser-242, which acts as the Charge relay system.

Belongs to the peptidase S1 family. Clotting factor G is a heterodimer composed of two non-covalently associated subunits, alpha and beta. Upon activation, converted to a two-chain active form linked by a disulfide bond. Forms a covalent heterodimer with intracellular coagulation inhibitor 3/LICI-3. Expressed in the hemocytes (at protein level).

It carries out the reaction Selective cleavage of 98-Arg-|-Ile-99 bond in Limulus proclotting enzyme to form active clotting enzyme.. Its activity is regulated as follows. Binding to (1-&gt;3)-beta-D-glucan to alpha subunit, induces autocatalysis and activation of beta subunit. Inhibited by intracellular coagulation inhibitor 3/LICI-3 and to a lesser extend by intracellular coagulation inhibitor 2/LICI-2. In terms of biological role, component of the heterodimer clotting factor G which may play a role in defense mechanisms against fungi. Initiates a (1-&gt;3)-beta-glucan-sensing clotting pathway whereby the alpha subunit binds to glucans containing (1-&gt;3)-beta linkages, which are components of the fungal cell wall, and the beta subunit catalyzes the activation of proclotting enzyme. The chain is Clotting factor G beta subunit from Tachypleus tridentatus (Japanese horseshoe crab).